Consider the following 61-residue polypeptide: Small ribosomal subunit protein uS14B (61 aa).

Positions 24, 27, 40, and 43 each coordinate Zn(2+).

Belongs to the universal ribosomal protein uS14 family. Zinc-binding uS14 subfamily. In terms of assembly, part of the 30S ribosomal subunit. Contacts proteins S3 and S10. Requires Zn(2+) as cofactor.

In terms of biological role, binds 16S rRNA, required for the assembly of 30S particles and may also be responsible for determining the conformation of the 16S rRNA at the A site. The protein is Small ribosomal subunit protein uS14B of Listeria welshimeri serovar 6b (strain ATCC 35897 / DSM 20650 / CCUG 15529 / CIP 8149 / NCTC 11857 / SLCC 5334 / V8).